A 237-amino-acid chain; its full sequence is 4-hydroxy-tetrahydrodipicolinate reductase (237 aa).

Residues 11–16 (GASGRM), 92–94 (GTT), and 116–119 (GSNF) contribute to the NAD(+) site. Residue histidine 148 is the Proton donor/acceptor of the active site. Histidine 149 provides a ligand contact to (S)-2,3,4,5-tetrahydrodipicolinate. The active-site Proton donor is lysine 152. 158–159 (GS) provides a ligand contact to (S)-2,3,4,5-tetrahydrodipicolinate.

Belongs to the DapB family.

Its subcellular location is the cytoplasm. The catalysed reaction is (S)-2,3,4,5-tetrahydrodipicolinate + NAD(+) + H2O = (2S,4S)-4-hydroxy-2,3,4,5-tetrahydrodipicolinate + NADH + H(+). The enzyme catalyses (S)-2,3,4,5-tetrahydrodipicolinate + NADP(+) + H2O = (2S,4S)-4-hydroxy-2,3,4,5-tetrahydrodipicolinate + NADPH + H(+). It participates in amino-acid biosynthesis; L-lysine biosynthesis via DAP pathway; (S)-tetrahydrodipicolinate from L-aspartate: step 4/4. In terms of biological role, catalyzes the conversion of 4-hydroxy-tetrahydrodipicolinate (HTPA) to tetrahydrodipicolinate. The sequence is that of 4-hydroxy-tetrahydrodipicolinate reductase from Xylella fastidiosa (strain 9a5c).